The sequence spans 172 residues: Resuscitation-promoting factor RpfE (172 aa).

The first 28 residues, Met1–Ala28, serve as a signal peptide directing secretion. Residues Leu33–Glu89 are disordered. The span at Asn49–Pro65 shows a compositional bias: pro residues.

The protein belongs to the transglycosylase family. Rpf subfamily. Interacts with RipA.

Factor that stimulates resuscitation of dormant cells. Has peptidoglycan (PG) hydrolytic activity. Active in the pM concentration range. Has little to no effect on actively-growing cells. PG fragments could either directly activate the resuscitation pathway of dormant bacteria or serve as a substrate for endogenous Rpf, resulting in low molecular weight products with resuscitation activity. In terms of biological role, stimulates growth of stationary phase M.bovis (a slow-growing Mycobacterium), reduces the lag phase of diluted fast-growers M.smegmatis and Micrococcus luteus. Sequential gene disruption indicates RpfB and RpfE are higher than RpfD and RpfC in functional hierarchy. The protein is Resuscitation-promoting factor RpfE (rpfE) of Mycobacterium tuberculosis (strain ATCC 25618 / H37Rv).